The primary structure comprises 633 residues: Threonine--tRNA ligase (633 aa).

Residues 1–61 (MINIYFNNNL…TENCTFEVIT (61 aa)) form the TGS domain. The tract at residues 242-533 (DHRKIGKELE…LIEHHSGKFP (292 aa)) is catalytic. Zn(2+) is bound by residues Cys-333, His-384, and His-510.

This sequence belongs to the class-II aminoacyl-tRNA synthetase family. In terms of assembly, homodimer. Requires Zn(2+) as cofactor.

Its subcellular location is the cytoplasm. The catalysed reaction is tRNA(Thr) + L-threonine + ATP = L-threonyl-tRNA(Thr) + AMP + diphosphate + H(+). In terms of biological role, catalyzes the attachment of threonine to tRNA(Thr) in a two-step reaction: L-threonine is first activated by ATP to form Thr-AMP and then transferred to the acceptor end of tRNA(Thr). Also edits incorrectly charged L-seryl-tRNA(Thr). In Ehrlichia canis (strain Jake), this protein is Threonine--tRNA ligase.